A 1190-amino-acid chain; its full sequence is ATPase histone chaperone abo1 (1190 aa).

Positions 1-11 are enriched in basic and acidic residues; sequence MKEEASEHGGS. 2 disordered regions span residues 1 to 185 and 204 to 253; these read MKEE…RKTH and YIDS…DLAD. Composition is skewed to acidic residues over residues 52 to 62 and 82 to 106; these read QEDEGDEDWEE and SEGDDEPFEVSESSALEDELSDSED. Residues 112 to 131 are compositionally biased toward basic residues; sequence VRSKPKYKPGTRRSTRLRNR. The span at 141 to 152 shows a compositional bias: basic and acidic residues; the sequence is EEHRPILRERTS. 309-314 serves as a coordination point for ATP; that stretch reads PGTGKT. The region spanning 794 to 922 is the Bromo domain; the sequence is RLLNKLKIKL…ANVLLGVEDM (129 aa).

Belongs to the AAA ATPase family. In terms of assembly, homohexamer. Interacts with the FACT complex subunits spt16 and pob3. Interacts with histone H3-H4 (via N-terminus).

It is found in the nucleus. Its subcellular location is the chromosome. The enzyme catalyses ATP + H2O = ADP + phosphate + H(+). In terms of biological role, ATPase histone chaperone which facilitates loading of histone H3-H4 onto DNA in an ATP-dependent manner. Plays a genome-wide role in nucleosome organization and establishment of chromatin. Also plays a role in heterochromatin assembly by stabilizing recruitment of the histone methyltransferase clr4 to methylated histone H3, to promote the transition from H3K9me2 to H3K9me3. The polypeptide is ATPase histone chaperone abo1 (Schizosaccharomyces pombe (strain 972 / ATCC 24843) (Fission yeast)).